Here is a 303-residue protein sequence, read N- to C-terminus: Cytidine deaminase (303 aa).

CMP/dCMP-type deaminase domains are found at residues 57–172 (TDKE…YLPD) and 196–303 (ITED…IQVS). Residue 98-100 (NQE) coordinates substrate. Histidine 111 contributes to the Zn(2+) binding site. Glutamate 113 functions as the Proton donor in the catalytic mechanism. Zn(2+) contacts are provided by cysteine 138 and cysteine 141.

This sequence belongs to the cytidine and deoxycytidylate deaminase family. As to quaternary structure, homodimer. Requires Zn(2+) as cofactor.

The catalysed reaction is cytidine + H2O + H(+) = uridine + NH4(+). It carries out the reaction 2'-deoxycytidine + H2O + H(+) = 2'-deoxyuridine + NH4(+). Functionally, this enzyme scavenges exogenous and endogenous cytidine and 2'-deoxycytidine for UMP synthesis. The protein is Cytidine deaminase of Histophilus somni (strain 2336) (Haemophilus somnus).